A 176-amino-acid polypeptide reads, in one-letter code: Large ribosomal subunit protein uL10 (176 aa).

Belongs to the universal ribosomal protein uL10 family. In terms of assembly, part of the ribosomal stalk of the 50S ribosomal subunit. The N-terminus interacts with L11 and the large rRNA to form the base of the stalk. The C-terminus forms an elongated spine to which L12 dimers bind in a sequential fashion forming a multimeric L10(L12)X complex.

In terms of biological role, forms part of the ribosomal stalk, playing a central role in the interaction of the ribosome with GTP-bound translation factors. In Natranaerobius thermophilus (strain ATCC BAA-1301 / DSM 18059 / JW/NM-WN-LF), this protein is Large ribosomal subunit protein uL10.